The chain runs to 22 residues: Caerin-3.5 (22 aa).

Lys22 is subject to Lysine amide.

As to expression, expressed by the skin dorsal glands.

Its subcellular location is the secreted. Its function is as follows. Shows significant activity against Gram-positive organisms, but is less effective against Gram-negative organisms. In Ranoidea gracilenta (Dainty green tree frog), this protein is Caerin-3.5.